The following is a 664-amino-acid chain: Macrolide export ATP-binding/permease protein MacB (664 aa).

The ABC transporter domain maps to 8 to 246 (LEVHNLVREF…ELNKDPDAAP (239 aa)). ATP is bound at residue 44 to 51 (GQSGSGKS). 4 consecutive transmembrane segments (helical) span residues 287–307 (FLTMLGIIIGIASVVTVVALG), 543–563 (IAVISLIVGGIGVMNIMLVSV), 587–607 (FLIEAILVCLIGGVLGVLLSL), and 629–649 (SIVAAFVCSTLIGVVFGFLPA).

The protein belongs to the ABC transporter superfamily. Macrolide exporter (TC 3.A.1.122) family. In terms of assembly, homodimer. Part of the tripartite efflux system MacAB-TolC, which is composed of an inner membrane transporter, MacB, a periplasmic membrane fusion protein, MacA, and an outer membrane component, TolC. The complex forms a large protein conduit and can translocate molecules across both the inner and outer membranes. Interacts with MacA.

The protein localises to the cell inner membrane. Its function is as follows. Part of the tripartite efflux system MacAB-TolC. MacB is a non-canonical ABC transporter that contains transmembrane domains (TMD), which form a pore in the inner membrane, and an ATP-binding domain (NBD), which is responsible for energy generation. Confers resistance against macrolides. This chain is Macrolide export ATP-binding/permease protein MacB, found in Acinetobacter baylyi (strain ATCC 33305 / BD413 / ADP1).